We begin with the raw amino-acid sequence, 307 residues long: Agmatinase (307 aa).

The Mn(2+) site is built by His-128, Asp-151, His-153, Asp-155, Asp-232, and Asp-234.

This sequence belongs to the arginase family. Agmatinase subfamily. Requires Mn(2+) as cofactor.

It catalyses the reaction agmatine + H2O = urea + putrescine. Its pathway is amine and polyamine biosynthesis; putrescine biosynthesis via agmatine pathway; putrescine from agmatine: step 1/1. Functionally, catalyzes the formation of putrescine from agmatine. The sequence is that of Agmatinase from Photorhabdus laumondii subsp. laumondii (strain DSM 15139 / CIP 105565 / TT01) (Photorhabdus luminescens subsp. laumondii).